Reading from the N-terminus, the 374-residue chain is Glutamate 5-kinase (374 aa).

An ATP-binding site is contributed by Lys16. 3 residues coordinate substrate: Ser56, Asp143, and Asn155. ATP-binding positions include 175-176 (TD) and 217-223 (SGGMLTK). Positions 282-360 (RGALILDDGA…SNIGAILGYK (79 aa)) constitute a PUA domain.

This sequence belongs to the glutamate 5-kinase family.

It localises to the cytoplasm. The enzyme catalyses L-glutamate + ATP = L-glutamyl 5-phosphate + ADP. It functions in the pathway amino-acid biosynthesis; L-proline biosynthesis; L-glutamate 5-semialdehyde from L-glutamate: step 1/2. Its function is as follows. Catalyzes the transfer of a phosphate group to glutamate to form L-glutamate 5-phosphate. This Marinomonas sp. (strain MWYL1) protein is Glutamate 5-kinase.